Consider the following 621-residue polypeptide: 2-hydroxyacyl-CoA lyase 2 (621 aa).

A helical membrane pass occupies residues 7–29; sequence LGCSLGAALGGVIFASYKLGLLY. E87 serves as a coordination point for thiamine diphosphate. The tract at residues 459 to 539 is thiamine pyrophosphate binding; sequence DFVGSAAYIM…VIALVGNDAC (81 aa). D510 and N536 together coordinate Mg(2+).

The protein belongs to the TPP enzyme family. Mg(2+) is required as a cofactor. Thiamine diphosphate serves as cofactor.

The protein localises to the endoplasmic reticulum membrane. The enzyme catalyses 2-hydroxyoctadecanoyl-CoA = heptadecanal + formyl-CoA. It catalyses the reaction (2R)-hydroxyhexadecanoyl-CoA = pentadecanal + formyl-CoA. Endoplasmic reticulum 2-OH acyl-CoA lyase involved in the cleavage (C1 removal) reaction in the fatty acid alpha-oxydation in a thiamine pyrophosphate (TPP)-dependent manner. This is 2-hydroxyacyl-CoA lyase 2 (ilvbl) from Danio rerio (Zebrafish).